Consider the following 163-residue polypeptide: Keratin-associated protein 11-1 (163 aa).

Tandem repeats lie at residues 111–120, 121–130, 131–140, and 141–150. Positions 111 to 150 are 4 X 10 AA approximate repeats; that stretch reads CQPLGGISSVCQPVGGISTVCQPVGGVSTVCQPACGVSRT.

This sequence belongs to the PMG family. In terms of tissue distribution, expressed in the upper matrix and in the entire hair cortex.

In the hair cortex, hair keratin intermediate filaments are embedded in an interfilamentous matrix, consisting of hair keratin-associated proteins (KRTAP), which are essential for the formation of a rigid and resistant hair shaft through their extensive disulfide bond cross-linking with abundant cysteine residues of hair keratins. The matrix proteins include the high-sulfur and high-glycine-tyrosine keratins. This is Keratin-associated protein 11-1 (KRTAP11-1) from Homo sapiens (Human).